An 80-amino-acid polypeptide reads, in one-letter code: Conotoxin ArMKLT2-0321 (80 aa).

Residues 1–21 (MKLTCVLIIAMLFLIVCQLNT) form the signal peptide. Positions 22-48 (ADDSTDKQEYRAVKLRDAMRNFKGSKR) are excised as a propeptide. Intrachain disulfides connect cysteine 50/cysteine 63, cysteine 57/cysteine 68, and cysteine 62/cysteine 77.

Belongs to the conotoxin O1 superfamily. As to expression, expressed by the venom duct.

It localises to the secreted. This Conus arenatus (Sand-dusted cone) protein is Conotoxin ArMKLT2-0321.